The following is a 106-amino-acid chain: Large ribosomal subunit protein bL21 (106 aa).

The protein belongs to the bacterial ribosomal protein bL21 family. Part of the 50S ribosomal subunit. Contacts protein L20.

Its function is as follows. This protein binds to 23S rRNA in the presence of protein L20. The sequence is that of Large ribosomal subunit protein bL21 from Chlamydia caviae (strain ATCC VR-813 / DSM 19441 / 03DC25 / GPIC) (Chlamydophila caviae).